The sequence spans 445 residues: Tubulin beta-1 chain (445 aa).

Residues Met1 to Ile4 carry the MREI motif motif. Gln11, Glu69, Ser138, Gly142, Thr143, Gly144, Asn204, and Asn226 together coordinate GTP. Residue Glu69 participates in Mg(2+) binding. Residues Gln424–Ala445 are disordered. Acidic residues predominate over residues Thr429–Ala445. Glu438 bears the 5-glutamyl polyglutamate mark.

It belongs to the tubulin family. In terms of assembly, dimer of alpha and beta chains. A typical microtubule is a hollow water-filled tube with an outer diameter of 25 nm and an inner diameter of 15 nM. Alpha-beta heterodimers associate head-to-tail to form protofilaments running lengthwise along the microtubule wall with the beta-tubulin subunit facing the microtubule plus end conferring a structural polarity. Microtubules usually have 13 protofilaments but different protofilament numbers can be found in some organisms and specialized cells. Mg(2+) serves as cofactor. Some glutamate residues at the C-terminus are polyglycylated, resulting in polyglycine chains on the gamma-carboxyl group. Glycylation is mainly limited to tubulin incorporated into axonemes (cilia and flagella) whereas glutamylation is prevalent in neuronal cells, centrioles, axonemes, and the mitotic spindle. Both modifications can coexist on the same protein on adjacent residues, and lowering polyglycylation levels increases polyglutamylation, and reciprocally. The precise function of polyglycylation is still unclear. In terms of processing, some glutamate residues at the C-terminus are polyglutamylated, resulting in polyglutamate chains on the gamma-carboxyl group. Polyglutamylation plays a key role in microtubule severing by spastin (SPAST). SPAST preferentially recognizes and acts on microtubules decorated with short polyglutamate tails: severing activity by SPAST increases as the number of glutamates per tubulin rises from one to eight, but decreases beyond this glutamylation threshold. As to expression, highly expressed in skeletal muscle.

The protein localises to the cytoplasm. It localises to the cytoskeleton. Its function is as follows. Tubulin is the major constituent of microtubules, a cylinder consisting of laterally associated linear protofilaments composed of alpha- and beta-tubulin heterodimers. Microtubules grow by the addition of GTP-tubulin dimers to the microtubule end, where a stabilizing cap forms. Below the cap, tubulin dimers are in GDP-bound state, owing to GTPase activity of alpha-tubulin. The sequence is that of Tubulin beta-1 chain from Gallus gallus (Chicken).